Reading from the N-terminus, the 216-residue chain is GTP cyclohydrolase 1 (216 aa).

The interval 1 to 33 is disordered; the sequence is MPQARGEGATPPTSLPNPSLKGVPLPDNPNNLE. The segment covering 24–33 has biased composition (low complexity); sequence PLPDNPNNLE. Residues cysteine 102, histidine 105, and cysteine 173 each contribute to the Zn(2+) site.

The protein belongs to the GTP cyclohydrolase I family. As to quaternary structure, toroid-shaped homodecamer, composed of two pentamers of five dimers.

The catalysed reaction is GTP + H2O = 7,8-dihydroneopterin 3'-triphosphate + formate + H(+). The protein operates within cofactor biosynthesis; 7,8-dihydroneopterin triphosphate biosynthesis; 7,8-dihydroneopterin triphosphate from GTP: step 1/1. The sequence is that of GTP cyclohydrolase 1 (folE) from Deinococcus radiodurans (strain ATCC 13939 / DSM 20539 / JCM 16871 / CCUG 27074 / LMG 4051 / NBRC 15346 / NCIMB 9279 / VKM B-1422 / R1).